Consider the following 598-residue polypeptide: MIQHIRNFSIIAHIDHGKSTLADRIIQFCGGLSDREMEAQVLDSMDLERERGITIKAQTAALYYQAKDGVNYLLNLIDTPGHVDFSYEVSRSLSACEGALLVVDASQGVEAQTVANCYTAIEQGVEVIPVLNKIDLPAADPDRVIAEIEDIIGIEARSALHISAKTGEGISEVLEMIVARIPPPEGEIDAPLRALIIDSWFDSYVGVVMLVRVMDGILKPGSKLLLMSNKANYLCEEVGVFQPKAVNRESLSAGEVGFIISGIKDLKSAKVGDTVTLVDHPASEPLDGFKEIKPQVFAGLYPVESNQYDALRAALEKLRLNDASLHFEPETSQALGFGFRCGFLGLLHLDIVQERLEREYDMDLITTAPTVVYQVVLHDGKIVEIENPSRLPELSSIEEIREPVITATILVPEEYVGAVITLCTGKRGVQENMQYMGRQVMLVYELPLNEVVMDFFDKLKSVSRGYASLDYEFKEFRVADLVKLDILINNERVDALSLIVHRASSQQRGRELAQKMRELIPRQMFDIAVQAAIGAHIVARENVKALRKNVLAKCYGGDITRKRKLLEKQKAGKKRMKRVGNVEIPQAAFLAILQVDGK.

One can recognise a tr-type G domain in the interval 3 to 185; the sequence is QHIRNFSIIA…MIVARIPPPE (183 aa). GTP contacts are provided by residues 15-20 and 132-135; these read DHGKST and NKID.

This sequence belongs to the TRAFAC class translation factor GTPase superfamily. Classic translation factor GTPase family. LepA subfamily.

It localises to the cell inner membrane. The enzyme catalyses GTP + H2O = GDP + phosphate + H(+). In terms of biological role, required for accurate and efficient protein synthesis under certain stress conditions. May act as a fidelity factor of the translation reaction, by catalyzing a one-codon backward translocation of tRNAs on improperly translocated ribosomes. Back-translocation proceeds from a post-translocation (POST) complex to a pre-translocation (PRE) complex, thus giving elongation factor G a second chance to translocate the tRNAs correctly. Binds to ribosomes in a GTP-dependent manner. The protein is Elongation factor 4 of Nitrosomonas eutropha (strain DSM 101675 / C91 / Nm57).